The sequence spans 924 residues: DNA repair and recombination protein RDH54 (924 aa).

A compositionally biased stretch (basic and acidic residues) spans 1–10; that stretch reads MQIPKYENKP. 2 disordered regions span residues 1 to 21 and 155 to 183; these read MQIP…GSNK and EALS…NDGG. The segment covering 168-178 has biased composition (low complexity); that stretch reads TTSTTETVPST. The 189-residue stretch at 299 to 487 folds into the Helicase ATP-binding domain; that stretch reads LENDSDISGC…FTIIDFINPG (189 aa). 346 to 353 serves as a coordination point for ATP; that stretch reads IPLTGLCK. The DEGH box signature appears at 472–475; sequence NDLN. Lys-615 participates in a covalent cross-link: Glycyl lysine isopeptide (Lys-Gly) (interchain with G-Cter in ubiquitin). A Helicase C-terminal domain is found at 631–790; sequence KLRVLMTLLE…DSEMRNKESS (160 aa).

It belongs to the SNF2/RAD54 helicase family. In terms of assembly, interacts with RAD51 and DMC1.

Its subcellular location is the nucleus. The enzyme catalyses ATP + H2O = ADP + phosphate + H(+). Functionally, involved in the recombinational repair of double-strand breaks (DSB) in DNA during mitosis and meiosis. Has DNA dependent ATPase activity. Promotes D-loop (displacement loop) formation with RAD51 recombinase. Modifies the topology of double-stranded DNA during the D-loop reaction to facilitate the invasion of the homologous duplex molecule by the initiating single-stranded DNA substrate. Required for adaptation from G2/M checkpoint arrest induced by a double strand break, by participating in monitoring the extent of single-stranded DNA produced by resection of DNA ends. This role is distinct from its roles in recombination. Promotes colocalization of RAD51 and DMC1 during meiotic recombination. Involved in crossover interference. This chain is DNA repair and recombination protein RDH54 (RDH54), found in Saccharomyces cerevisiae (strain YJM789) (Baker's yeast).